The following is a 141-amino-acid chain: Cystatin (141 aa).

The first 26 residues, 1–26 (MVHSQLPVAGPLRLLCALLLLPSATM), serve as a signal peptide directing secretion. A Cystatin domain is found at 29–129 (GGLSPRSVTD…CRFQVWSRPW (101 aa)). Positions 73–77 (QVVSG) match the Secondary area of contact motif. Disulfide bonds link Cys91–Cys107 and Cys120–Cys140.

It belongs to the cystatin family. As to expression, expressed at a low level by the venom gland (at protein level).

It localises to the secreted. In terms of biological role, inhibits various C1 cysteine proteases including cathepsin L, papain and cathepsin B. This protein has no toxic activity and its function in the venom is unknown. It may play a role as a housekeeping or regulatory protein. This is Cystatin from Pseudechis porphyriacus (Red-bellied black snake).